The chain runs to 559 residues: Chaperonin GroEL 3 (559 aa).

ATP is bound by residues 88-92 (DGTTT), Gly-426, and Asp-507.

Belongs to the chaperonin (HSP60) family. Forms a cylinder of 14 subunits composed of two heptameric rings stacked back-to-back. Interacts with the co-chaperonin GroES.

Its subcellular location is the cytoplasm. It carries out the reaction ATP + H2O + a folded polypeptide = ADP + phosphate + an unfolded polypeptide.. In terms of biological role, together with its co-chaperonin GroES, plays an essential role in assisting protein folding. The GroEL-GroES system forms a nano-cage that allows encapsulation of the non-native substrate proteins and provides a physical environment optimized to promote and accelerate protein folding. The protein is Chaperonin GroEL 3 of Methylococcus capsulatus (strain ATCC 33009 / NCIMB 11132 / Bath).